The primary structure comprises 536 residues: L-aspartate oxidase 2 (536 aa).

FAD is bound by residues 22 to 25 (EGLA) and 51 to 58 (SSYWAQGG). The active-site Proton donor/acceptor is the R284. FAD is bound by residues E369 and 385-386 (SL).

It belongs to the FAD-dependent oxidoreductase 2 family. NadB subfamily. FAD serves as cofactor.

The protein localises to the cytoplasm. It carries out the reaction L-aspartate + O2 = iminosuccinate + H2O2. It functions in the pathway cofactor biosynthesis; NAD(+) biosynthesis; iminoaspartate from L-aspartate (oxidase route): step 1/1. Functionally, catalyzes the oxidation of L-aspartate to iminoaspartate, the first step in the de novo biosynthesis of NAD(+). The protein is L-aspartate oxidase 2 (nadB2) of Ralstonia nicotianae (strain ATCC BAA-1114 / GMI1000) (Ralstonia solanacearum).